A 242-amino-acid chain; its full sequence is Biosynthetic peptidoglycan transglycosylase (242 aa).

A helical membrane pass occupies residues 19-39; the sequence is ILAALAVFWGGGIALFSVVPV.

It belongs to the glycosyltransferase 51 family.

Its subcellular location is the cell inner membrane. The catalysed reaction is [GlcNAc-(1-&gt;4)-Mur2Ac(oyl-L-Ala-gamma-D-Glu-L-Lys-D-Ala-D-Ala)](n)-di-trans,octa-cis-undecaprenyl diphosphate + beta-D-GlcNAc-(1-&gt;4)-Mur2Ac(oyl-L-Ala-gamma-D-Glu-L-Lys-D-Ala-D-Ala)-di-trans,octa-cis-undecaprenyl diphosphate = [GlcNAc-(1-&gt;4)-Mur2Ac(oyl-L-Ala-gamma-D-Glu-L-Lys-D-Ala-D-Ala)](n+1)-di-trans,octa-cis-undecaprenyl diphosphate + di-trans,octa-cis-undecaprenyl diphosphate + H(+). It functions in the pathway cell wall biogenesis; peptidoglycan biosynthesis. In terms of biological role, peptidoglycan polymerase that catalyzes glycan chain elongation from lipid-linked precursors. The protein is Biosynthetic peptidoglycan transglycosylase of Salmonella heidelberg (strain SL476).